Here is a 315-residue protein sequence, read N- to C-terminus: Taste receptor type 2 member 129 (315 aa).

Residues 1-9 are Extracellular-facing; sequence MDGIIQIIS. The chain crosses the membrane as a helical span at residues 10 to 30; that stretch reads AFIVIIEIIIGWFGNGFIVLV. At 31 to 46 the chain is on the cytoplasmic side; the sequence is NCMHWIKRRRISTVNQ. A helical membrane pass occupies residues 47–67; that stretch reads ILTALAFSRIYLLLTVFTVIL. The Extracellular portion of the chain corresponds to 68-101; that stretch reads ASVQYSNILVTRREVKVIIFHLITSNHFSMWLAA. A helical membrane pass occupies residues 102-122; that stretch reads CLGLFYFLKIANFSNFIFVFL. Over 123 to 128 the chain is Cytoplasmic; it reads KKRVNK. The chain crosses the membrane as a helical span at residues 129–149; sequence VVSGTLLMSLVFLFLNTLLIN. Over 150–185 the chain is Extracellular; the sequence is SYIDAQIDDYRGYLLYDFTSNITVSFYRVILVINNC. An N-linked (GlcNAc...) asparagine glycan is attached at Asn170. The helical transmembrane segment at 186–206 threads the bilayer; that stretch reads IFTSIPFALSQSTFLMLIFSL. Residues 207-233 lie on the Cytoplasmic side of the membrane; it reads WRHYKKMQQHAQRCRDTLTNAHIKVLQ. The chain crosses the membrane as a helical span at residues 234 to 254; it reads TMIMYVLLSAIFFLFLSMQIW. Over 255–266 the chain is Extracellular; that stretch reads RNKLMENILFIR. The chain crosses the membrane as a helical span at residues 267–287; the sequence is FCETVAAVFPSGHSCVLIWGD. The Cytoplasmic segment spans residues 288-315; that stretch reads TNLRQTFLSVLWWLKHRFTLWVPKLYCR.

It belongs to the G-protein coupled receptor T2R family.

It localises to the membrane. Functionally, putative taste receptor which may play a role in the perception of bitterness. The protein is Taste receptor type 2 member 129 of Rattus norvegicus (Rat).